We begin with the raw amino-acid sequence, 530 residues long: Chaperone Ric-8A (530 aa).

Serine 435 is modified (phosphoserine). A phosphothreonine mark is found at threonine 440 and threonine 442. Residues serine 501, serine 522, serine 523, and serine 527 each carry the phosphoserine modification.

This sequence belongs to the synembryn family. In terms of assembly, interacts with GDP-bound G alpha proteins GNAI1, GNAO1 and GNAQ, and with GNA13 with lower affinity. Does not interact with G-alpha proteins when they are in complex with subunits beta and gamma. Interacts (via C-terminus) with RGS14; the interaction stimulates the dissociation of the complex between RGS14 and the active GTP-bound form of GNAI1. Interacts with NCS1; interaction is favored in the absence of Ca(2+) and myristoylation of NCS1 is not required. In terms of processing, phosphorylated at Ser-435 and Thr-440 by CK2, stabilizing its interface with G alpha proteins.

It is found in the cytoplasm. It localises to the cell cortex. Chaperone that specifically binds and folds nascent G alpha proteins prior to G protein heterotrimer formation, promoting their stability and activity: folds GNAI1, GNAO1, GNA13 and GNAQ. Does not fold G(s) G-alpha proteins GNAS nor GNAL. Also acts as a guanine nucleotide exchange factor (GEF) for G alpha proteins by stimulating exchange of bound GDP for free GTP. Involved in regulation of microtubule pulling forces during mitotic movement of chromosomes by stimulating G(i)-alpha protein (GNAI1), possibly leading to release G(i)-alpha-GTP and NuMA proteins from the NuMA-GPSM2-G(i)-alpha-GDP complex. Also acts as an activator for G(q)-alpha (GNAQ) protein by enhancing the G(q)-coupled receptor-mediated ERK activation. The polypeptide is Chaperone Ric-8A (RIC8A) (Bos taurus (Bovine)).